We begin with the raw amino-acid sequence, 236 residues long: 2,3,4,5-tetrahydropyridine-2,6-dicarboxylate N-acetyltransferase (236 aa).

It belongs to the transferase hexapeptide repeat family. DapH subfamily.

It catalyses the reaction (S)-2,3,4,5-tetrahydrodipicolinate + acetyl-CoA + H2O = L-2-acetamido-6-oxoheptanedioate + CoA. Its pathway is amino-acid biosynthesis; L-lysine biosynthesis via DAP pathway; LL-2,6-diaminopimelate from (S)-tetrahydrodipicolinate (acetylase route): step 1/3. Functionally, catalyzes the transfer of an acetyl group from acetyl-CoA to tetrahydrodipicolinate. In Oceanobacillus iheyensis (strain DSM 14371 / CIP 107618 / JCM 11309 / KCTC 3954 / HTE831), this protein is 2,3,4,5-tetrahydropyridine-2,6-dicarboxylate N-acetyltransferase.